Here is a 472-residue protein sequence, read N- to C-terminus: Glutamate--tRNA ligase (472 aa).

Positions 9–19 (PSPTGYLHVGG) match the 'HIGH' region motif. Zn(2+) contacts are provided by Cys-98, Cys-100, Cys-125, and His-127. Residues 237–241 (KLSKR) carry the 'KMSKS' region motif. Lys-240 provides a ligand contact to ATP.

Belongs to the class-I aminoacyl-tRNA synthetase family. Glutamate--tRNA ligase type 1 subfamily. As to quaternary structure, monomer. The cofactor is Zn(2+).

Its subcellular location is the cytoplasm. The enzyme catalyses tRNA(Glu) + L-glutamate + ATP = L-glutamyl-tRNA(Glu) + AMP + diphosphate. In terms of biological role, catalyzes the attachment of glutamate to tRNA(Glu) in a two-step reaction: glutamate is first activated by ATP to form Glu-AMP and then transferred to the acceptor end of tRNA(Glu). This Klebsiella pneumoniae subsp. pneumoniae (strain ATCC 700721 / MGH 78578) protein is Glutamate--tRNA ligase.